A 122-amino-acid chain; its full sequence is Small ribosomal subunit protein uS13 (122 aa).

Residues 95-122 are disordered; sequence GLPVHGQRTHTNARTRKGPRRGAVGKKK.

Belongs to the universal ribosomal protein uS13 family. Part of the 30S ribosomal subunit. Forms a loose heterodimer with protein S19. Forms two bridges to the 50S subunit in the 70S ribosome.

In terms of biological role, located at the top of the head of the 30S subunit, it contacts several helices of the 16S rRNA. In the 70S ribosome it contacts the 23S rRNA (bridge B1a) and protein L5 of the 50S subunit (bridge B1b), connecting the 2 subunits; these bridges are implicated in subunit movement. Contacts the tRNAs in the A and P-sites. This chain is Small ribosomal subunit protein uS13, found in Nitratidesulfovibrio vulgaris (strain DSM 19637 / Miyazaki F) (Desulfovibrio vulgaris).